A 971-amino-acid chain; its full sequence is MASVRASPRSALLLLLAAAGVAEVTGGLAPGSAGAVCCNHSKDNQMCRDVCEQIFSSKSESRLKHLLQRAPDYCPETMVEIWSCMNSSLPGVFKKSDGWVGLGCCELAIGLECRQACKQASSKNDISKVCRKEYENALFSCISRNEMGSVCCSYAGHHTNCREFCQAIFRTDSSPGPSQIKAVENYCASISPQLIHCVNNYTQSYPMRNPTDSLYCCDRAEDHACQNACKRILMSKKTEMEIVDGLIEGCKTQPLPQDPLWQCFLESSQSVHPGVTVHPPPSTGLDGAKLHCCSKANTSTCRELCTKLYSMSWGNTQSWQEFDRICEYNPVEVSMLTCLADVREPCQLGCTNLTYCTNFNNRPTELFRSCTAQSDQGAMSDMKLWEKGSIKMPFISIPVLDIKTCQPEMWKAVACSLQIKPCHSKSRGSIICKSDCVEILKKCGDQNKFPEEHTAESICEFLSPADDLESCIPLDTYLRPSALGNIIEEVTHPCNPNPCPANELCEVNRKGCPSADPCLPYSCVQGCKLGEASDFIVRQGTLIQVPSSAGEVGCYKICSCGQSGLLENCMEMHCIDLQKSCIVGGKRKSHGTSFTIDCNVCSCFAGNLVCSTRLCLSEHSSDDDRRTFTGLPCNCADQFVPVCAQNGRTYPSACIARCVGLQDHQFEFGPCISKNPCNPNLCPKSQRCVPKPQVCLTTFDKFGCSQYECVPRQLTCDQARDPVCDTDHMEHSNLCTLYQRGKSLSYRGPCQPFCRAKEPVCGHNGETYSSVCAAYSDRVAVDYYGPCQAVGVLSEYSAVAECAAVKCPSLSAIGCKPIIPPGACCPLCAGMLRVLFDKEKLDTIAKVTSKKPITVVEILQKVRMHVSVPQCDVFGYLSIESEIVILIIPVDHYPKALQIEACNKEAEKIESLINSDSPTLASHVPLSALIISQVQVSSSLPSSAVVGRPLFHSLLLLLSLGLTVHLLWTRP.

Positions 1-22 are cleaved as a signal peptide; that stretch reads MASVRASPRSALLLLLAAAGVA. A Knot 1 repeat occupies 37 to 84; that stretch reads CCNHSKDNQMCRDVCEQIFSSKSESRLKHLLQRAPDYCPETMVEIWSC. The 5 X Knot repeats stretch occupies residues 37-338; sequence CCNHSKDNQM…NPVEVSMLTC (302 aa). N-linked (GlcNAc...) asparagine glycans are attached at residues Asn-39 and Asn-86. Knot repeat units follow at residues 104–141 and 151–197; these read CCELAIGLECRQACKQASSKNDISKVCRKEYENALFSC and CCSY…LIHC. Asn-200 is a glycosylation site (N-linked (GlcNAc...) asparagine). 2 Knot repeats span residues 216–263 and 292–338; these read CCDR…LWQC and CCSK…MLTC. N-linked (GlcNAc...) asparagine glycosylation is found at Asn-297 and Asn-352. 3 Kazal-like domains span residues 627–673, 698–752, and 753–789; these read TFTG…PCIS, TFDK…PCQP, and FCRAKEPVCGHNGETYSSVCAAYSDRVAVDYYGPCQA. Intrachain disulfides connect Cys-633–Cys-658, Cys-635–Cys-654, Cys-643–Cys-671, Cys-716–Cys-735, Cys-724–Cys-750, and Cys-761–Cys-787. A Kazal-like 2; degenerate domain is found at 704–750; that stretch reads CSQYECVPRQLTCDQARDPVCDTDHMEHSNLCTLYQRGKSLSYRGPC. The GPI-anchor amidated serine moiety is linked to residue Ser-942. Positions 943 to 971 are cleaved as a propeptide — removed in mature form; the sequence is SAVVGRPLFHSLLLLLSLGLTVHLLWTRP.

Belongs to the RECK family. As to quaternary structure, interacts (via knot repeats) with WNT7A (via disordered linker region); the interaction is direct. Interacts (via knot repeats) with WNT7B (via disordered linker region); the interaction is direct. Interacts with ADGRA2; the interaction is direct. Interacts with MMP9.

It localises to the cell membrane. Its function is as follows. Functions together with ADGRA2 to enable brain endothelial cells to selectively respond to Wnt7 signals (WNT7A or WNT7B). Plays a key role in Wnt7-specific responses: required for central nervous system (CNS) angiogenesis and blood-brain barrier regulation. Acts as a Wnt7-specific coactivator of canonical Wnt signaling by decoding Wnt ligands: acts by interacting specifically with the disordered linker region of Wnt7, thereby conferring ligand selectivity for Wnt7. ADGRA2 is then required to deliver RECK-bound Wnt7 to frizzled by assembling a higher-order RECK-ADGRA2-Fzd-LRP5-LRP6 complex. Also acts as a serine protease inhibitor: negatively regulates matrix metalloproteinase-9 (MMP9) by suppressing MMP9 secretion and by direct inhibition of its enzymatic activity. Also inhibits metalloproteinase activity of MMP2 and MMP14 (MT1-MMP). The chain is Reversion-inducing cysteine-rich protein with Kazal motifs from Mus musculus (Mouse).